Reading from the N-terminus, the 400-residue chain is Cysteine desulfurase (400 aa).

Pyridoxal 5'-phosphate-binding positions include Gly72 to Thr73, Asn152, Gln180, and Ser200 to His202. Lys203 carries the N6-(pyridoxal phosphate)lysine modification. Thr238 contacts pyridoxal 5'-phosphate. Residue Cys326 is the Cysteine persulfide intermediate of the active site. A [2Fe-2S] cluster-binding site is contributed by Cys326.

Belongs to the class-V pyridoxal-phosphate-dependent aminotransferase family. NifS/IscS subfamily. As to quaternary structure, homodimer. Requires pyridoxal 5'-phosphate as cofactor.

The enzyme catalyses (sulfur carrier)-H + L-cysteine = (sulfur carrier)-SH + L-alanine. Its function is as follows. Catalyzes the removal of elemental sulfur atoms from cysteine to produce alanine. Seems to participate in the biosynthesis of the nitrogenase metalloclusters by providing the inorganic sulfur required for the Fe-S core formation. In Gluconacetobacter diazotrophicus (strain ATCC 49037 / DSM 5601 / CCUG 37298 / CIP 103539 / LMG 7603 / PAl5), this protein is Cysteine desulfurase.